Reading from the N-terminus, the 276-residue chain is NAD kinase (276 aa).

The active-site Proton acceptor is Asp-61. NAD(+) is bound by residues 61 to 62 (DG), Arg-66, 135 to 136 (NE), Arg-146, His-163, Asp-165, and Ala-200.

This sequence belongs to the NAD kinase family. A divalent metal cation is required as a cofactor.

The protein resides in the cytoplasm. The catalysed reaction is NAD(+) + ATP = ADP + NADP(+) + H(+). Functionally, involved in the regulation of the intracellular balance of NAD and NADP, and is a key enzyme in the biosynthesis of NADP. Catalyzes specifically the phosphorylation on 2'-hydroxyl of the adenosine moiety of NAD to yield NADP. The sequence is that of NAD kinase from Chloroflexus aurantiacus (strain ATCC 29366 / DSM 635 / J-10-fl).